A 218-amino-acid polypeptide reads, in one-letter code: uncharacterized protein (218 aa).

Basic and acidic residues predominate over residues 184-202; the sequence is MDREEKRKEKEEKRKRELA. A disordered region spans residues 184-218; it reads MDREEKRKEKEEKRKRELAARQLKRQEKKKQKTSK. The segment covering 205–218 has biased composition (basic residues); the sequence is QLKRQEKKKQKTSK.

This is an uncharacterized protein from Mycoplasma pneumoniae (strain ATCC 29342 / M129 / Subtype 1) (Mycoplasmoides pneumoniae).